The primary structure comprises 1202 residues: Stress response protein NST1 (1202 aa).

Disordered regions lie at residues 28-217, 236-291, 390-423, 487-543, 579-852, 904-967, and 979-1015; these read RHLN…EDDA, GHYQ…SGSK, RSAP…DDEE, AHPS…RMEE, ELEE…SMLP, PNQA…DSDV, and LLDE…DAPN. Residues 158–167 are compositionally biased toward basic and acidic residues; that stretch reads REKEAAKKAA. The span at 178-187 shows a compositional bias: polar residues; the sequence is NGVSSGSTHL. Over residues 204 to 217 the composition is skewed to acidic residues; it reads PELDDPQYDDEDDA. Positions 252–261 are enriched in basic residues; the sequence is KKPRKKKKGA. Composition is skewed to acidic residues over residues 408 to 423 and 504 to 536; these read YDDE…DDEE and PEEE…EAMT. Residues 557–704 are a coiled coil; that stretch reads EQRVLQAYRE…EKKVKDDAKR (148 aa). Residues 579 to 710 are compositionally biased toward basic and acidic residues; sequence ELEEENEKKD…DAKRKERDRA (132 aa). Positions 754–789 are enriched in polar residues; it reads RPRQTSRQGSHGSSPKTPQVAPGTSKSMSPTSQAQG. Over residues 816–828 the composition is skewed to pro residues; that stretch reads SPMPPIGPPPGLS. Positions 830-848 are enriched in low complexity; it reads PPGLSMGLPPGLNGFPGPG. Over residues 916 to 926 the composition is skewed to polar residues; it reads TQHSRQGSGSF. The segment covering 954 to 967 has biased composition (basic and acidic residues); that stretch reads KPHDSNKHGQDSDV.

This sequence belongs to the NST1 family.

It localises to the cytoplasm. Its function is as follows. May act as a negative regulator of salt tolerance. The sequence is that of Stress response protein NST1 (NST1) from Phaeosphaeria nodorum (strain SN15 / ATCC MYA-4574 / FGSC 10173) (Glume blotch fungus).